Consider the following 411-residue polypeptide: Actin-like protein 9 (411 aa).

Residues 1–15 (MDVNGPKRWEPHRSL) show a composition bias toward basic and acidic residues. Positions 1–23 (MDVNGPKRWEPHRSLDLNPRSTP) are disordered.

Belongs to the actin family. As to quaternary structure, interacts with ACTL7A.

It localises to the cytoplasmic vesicle. The protein localises to the secretory vesicle. It is found in the acrosome. Its subcellular location is the cytoplasm. The protein resides in the cytoskeleton. It localises to the perinuclear theca. In terms of biological role, testis-specic protein that plays an important role in fusion of proacrosomal vesicles and perinuclear theca formation. The sequence is that of Actin-like protein 9 (Actl9) from Rattus norvegicus (Rat).